A 377-amino-acid chain; its full sequence is Nitric oxide reductase FlRd-NAD(+) reductase (377 aa).

Belongs to the FAD-dependent oxidoreductase family. FAD is required as a cofactor.

It is found in the cytoplasm. It catalyses the reaction 2 reduced [nitric oxide reductase rubredoxin domain] + NAD(+) + H(+) = 2 oxidized [nitric oxide reductase rubredoxin domain] + NADH. It functions in the pathway nitrogen metabolism; nitric oxide reduction. One of at least two accessory proteins for anaerobic nitric oxide (NO) reductase. Reduces the rubredoxin moiety of NO reductase. This Escherichia coli (strain SE11) protein is Nitric oxide reductase FlRd-NAD(+) reductase.